Here is a 332-residue protein sequence, read N- to C-terminus: tRNA-dihydrouridine synthase B (332 aa).

Residues 19-21 (PMA) and Q73 each bind FMN. Catalysis depends on C103, which acts as the Proton donor. Residues K142, 203-205 (NGD), and 227-228 (GR) contribute to the FMN site.

It belongs to the Dus family. DusB subfamily. Requires FMN as cofactor.

It carries out the reaction a 5,6-dihydrouridine in tRNA + NAD(+) = a uridine in tRNA + NADH + H(+). The enzyme catalyses a 5,6-dihydrouridine in tRNA + NADP(+) = a uridine in tRNA + NADPH + H(+). Functionally, catalyzes the synthesis of 5,6-dihydrouridine (D), a modified base found in the D-loop of most tRNAs, via the reduction of the C5-C6 double bond in target uridines. The chain is tRNA-dihydrouridine synthase B from Pseudomonas aeruginosa (strain ATCC 15692 / DSM 22644 / CIP 104116 / JCM 14847 / LMG 12228 / 1C / PRS 101 / PAO1).